Here is a 1047-residue protein sequence, read N- to C-terminus: Carbamoyl phosphate synthase large chain (1047 aa).

Residues 1-398 (MPRRDDIHRI…ALMKAIASLD (398 aa)) are carboxyphosphate synthetic domain. ATP is bound by residues Arg129, Arg169, Gly175, Gly176, Glu208, Leu210, Glu215, Gly241, Val242, His243, Gln284, and Glu296. The region spanning 133-325 (YEFLKAMGEP…IARIAAKIAA (193 aa)) is the ATP-grasp 1 domain. Positions 284, 296, and 298 each coordinate Mg(2+). 3 residues coordinate Mn(2+): Gln284, Glu296, and Asn298. The segment at 399–539 (NAFSSNIRLH…YSTYEDEDET (141 aa)) is oligomerization domain. Positions 540-916 (PDLSGSIMII…ALRKSLQRSI (377 aa)) are carbamoyl phosphate synthetic domain. An ATP-grasp 2 domain is found at 665–854 (SRVIEGLGIK…WVRLAVECMI (190 aa)). Residues Arg701, Lys738, Leu740, Glu745, Gly770, Val771, His772, Ser773, Gln813, and Glu825 each contribute to the ATP site. Residues Gln813, Glu825, and Asn827 each coordinate Mg(2+). Positions 813, 825, and 827 each coordinate Mn(2+). The MGS-like domain occupies 910–1047 (KSLQRSISSV…REIGDYLQVS (138 aa)). The segment at 916–1047 (ISSVLITVRD…REIGDYLQVS (132 aa)) is allosteric domain.

Belongs to the CarB family. Composed of two chains; the small (or glutamine) chain promotes the hydrolysis of glutamine to ammonia, which is used by the large (or ammonia) chain to synthesize carbamoyl phosphate. Tetramer of heterodimers (alpha,beta)4. Mg(2+) serves as cofactor. Mn(2+) is required as a cofactor.

It catalyses the reaction hydrogencarbonate + L-glutamine + 2 ATP + H2O = carbamoyl phosphate + L-glutamate + 2 ADP + phosphate + 2 H(+). The enzyme catalyses hydrogencarbonate + NH4(+) + 2 ATP = carbamoyl phosphate + 2 ADP + phosphate + 2 H(+). Its pathway is amino-acid biosynthesis; L-arginine biosynthesis; carbamoyl phosphate from bicarbonate: step 1/1. It participates in pyrimidine metabolism; UMP biosynthesis via de novo pathway; (S)-dihydroorotate from bicarbonate: step 1/3. Large subunit of the glutamine-dependent carbamoyl phosphate synthetase (CPSase). CPSase catalyzes the formation of carbamoyl phosphate from the ammonia moiety of glutamine, carbonate, and phosphate donated by ATP, constituting the first step of 2 biosynthetic pathways, one leading to arginine and/or urea and the other to pyrimidine nucleotides. The large subunit (synthetase) binds the substrates ammonia (free or transferred from glutamine from the small subunit), hydrogencarbonate and ATP and carries out an ATP-coupled ligase reaction, activating hydrogencarbonate by forming carboxy phosphate which reacts with ammonia to form carbamoyl phosphate. This Thermoplasma acidophilum (strain ATCC 25905 / DSM 1728 / JCM 9062 / NBRC 15155 / AMRC-C165) protein is Carbamoyl phosphate synthase large chain.